The primary structure comprises 157 residues: Arginine repressor (157 aa).

This sequence belongs to the ArgR family.

It localises to the cytoplasm. It participates in amino-acid biosynthesis; L-arginine biosynthesis [regulation]. Functionally, regulates arginine biosynthesis genes. This chain is Arginine repressor, found in Colwellia psychrerythraea (strain 34H / ATCC BAA-681) (Vibrio psychroerythus).